A 277-amino-acid chain; its full sequence is Undecaprenyl-diphosphatase 1 (277 aa).

Transmembrane regions (helical) follow at residues 1–21, 39–58, 85–105, 113–133, 147–167, 191–211, 226–246, and 251–271; these read MSLL…FLPI, AGFS…VILY, FWFA…GILF, FKAP…LIII, MTIW…IPGL, SFLL…DDLI, ASFV…LNLV, and LVYF…FQDA.

Belongs to the UppP family.

Its subcellular location is the cell membrane. It carries out the reaction di-trans,octa-cis-undecaprenyl diphosphate + H2O = di-trans,octa-cis-undecaprenyl phosphate + phosphate + H(+). In terms of biological role, catalyzes the dephosphorylation of undecaprenyl diphosphate (UPP). Confers resistance to bacitracin. This chain is Undecaprenyl-diphosphatase 1, found in Shouchella clausii (strain KSM-K16) (Alkalihalobacillus clausii).